Here is a 689-residue protein sequence, read N- to C-terminus: Glycine--tRNA ligase beta subunit (689 aa).

It belongs to the class-II aminoacyl-tRNA synthetase family. Tetramer of two alpha and two beta subunits.

The protein localises to the cytoplasm. The enzyme catalyses tRNA(Gly) + glycine + ATP = glycyl-tRNA(Gly) + AMP + diphosphate. In Dichelobacter nodosus (strain VCS1703A), this protein is Glycine--tRNA ligase beta subunit.